Reading from the N-terminus, the 416-residue chain is Phosphoglycerate kinase (416 aa).

(2R)-3-phosphoglycerate contacts are provided by valine 23, aspartate 24, phenylalanine 25, asparagine 26, glutamine 38, arginine 39, serine 62, histidine 63, glycine 65, arginine 66, leucine 121, arginine 122, histidine 168, and arginine 169. Glycine 212 contributes to the ADP binding site. A CDP-binding site is contributed by glycine 212. Residues alanine 213 and lysine 214 each coordinate AMP. Residue alanine 213 participates in ATP binding. Alanine 213 is a Mg(2+) binding site. Aspartate 217 contacts CDP. Residue aspartate 217 participates in Mg(2+) binding. An AMP-binding site is contributed by lysine 218. Lysine 218 contacts ATP. An ADP-binding site is contributed by glycine 236. CDP is bound at residue glycine 236. Residues glycine 237 and glycine 311 each coordinate AMP. Glycine 237 and glycine 311 together coordinate ATP. CDP is bound by residues glycine 336 and phenylalanine 341. ADP is bound at residue phenylalanine 341. Glutamate 342 is an AMP binding site. ATP-binding residues include glutamate 342, aspartate 373, and threonine 374. Aspartate 373 provides a ligand contact to Mg(2+).

This sequence belongs to the phosphoglycerate kinase family. In terms of assembly, monomer. Requires Mg(2+) as cofactor.

It is found in the cytoplasm. The protein resides in the mitochondrion. The enzyme catalyses (2R)-3-phosphoglycerate + ATP = (2R)-3-phospho-glyceroyl phosphate + ADP. Its pathway is carbohydrate degradation; glycolysis; pyruvate from D-glyceraldehyde 3-phosphate: step 2/5. Catalyzes one of the two ATP producing reactions in the glycolytic pathway via the reversible conversion of 1,3-diphosphoglycerate to 3-phosphoglycerate. Both L- and D- forms of purine and pyrimidine nucleotides can be used as substrates, but the activity is much lower on pyrimidines. Negatively regulates the biosynthesis of acetyl-CoA from pyruvate in the mitochondrion. The chain is Phosphoglycerate kinase (PGK1) from Komagataella pastoris (Yeast).